We begin with the raw amino-acid sequence, 164 residues long: Endoribonuclease YbeY (164 aa).

The Zn(2+) site is built by His125, His129, and His135.

It belongs to the endoribonuclease YbeY family. The cofactor is Zn(2+).

The protein localises to the cytoplasm. In terms of biological role, single strand-specific metallo-endoribonuclease involved in late-stage 70S ribosome quality control and in maturation of the 3' terminus of the 16S rRNA. The protein is Endoribonuclease YbeY of Paramagnetospirillum magneticum (strain ATCC 700264 / AMB-1) (Magnetospirillum magneticum).